Reading from the N-terminus, the 262-residue chain is Large ribosomal subunit protein uL5c (262 aa).

Residues 1-39 (MASPSLLQSSASSFHGRFSPLAAPSSARMLSPPLRNVVK) constitute a chloroplast transit peptide.

Belongs to the universal ribosomal protein uL5 family. In terms of assembly, part of the 50S ribosomal subunit; contacts the 5S rRNA.

The protein resides in the plastid. It localises to the chloroplast. In terms of biological role, binds 5S rRNA, forms part of the central protuberance of the 50S subunit. This chain is Large ribosomal subunit protein uL5c (RPL5), found in Arabidopsis thaliana (Mouse-ear cress).